Here is a 415-residue protein sequence, read N- to C-terminus: Multifunctional CCA protein (415 aa).

Residues Gly8 and Arg11 each contribute to the ATP site. Gly8 and Arg11 together coordinate CTP. Mg(2+) contacts are provided by Glu21 and Asp23. ATP-binding residues include Arg91, Arg137, and Arg140. CTP contacts are provided by Arg91, Arg137, and Arg140. The HD domain occupies 226–327 (TGIHTLMTVS…IKLFSAIDVW (102 aa)).

The protein belongs to the tRNA nucleotidyltransferase/poly(A) polymerase family. Bacterial CCA-adding enzyme type 1 subfamily. Monomer. Can also form homodimers and oligomers. Requires Mg(2+) as cofactor. Ni(2+) is required as a cofactor.

It carries out the reaction a tRNA precursor + 2 CTP + ATP = a tRNA with a 3' CCA end + 3 diphosphate. The catalysed reaction is a tRNA with a 3' CCA end + 2 CTP + ATP = a tRNA with a 3' CCACCA end + 3 diphosphate. Its function is as follows. Catalyzes the addition and repair of the essential 3'-terminal CCA sequence in tRNAs without using a nucleic acid template. Adds these three nucleotides in the order of C, C, and A to the tRNA nucleotide-73, using CTP and ATP as substrates and producing inorganic pyrophosphate. tRNA 3'-terminal CCA addition is required both for tRNA processing and repair. Also involved in tRNA surveillance by mediating tandem CCA addition to generate a CCACCA at the 3' terminus of unstable tRNAs. While stable tRNAs receive only 3'-terminal CCA, unstable tRNAs are marked with CCACCA and rapidly degraded. In Sodalis glossinidius (strain morsitans), this protein is Multifunctional CCA protein.